The following is a 139-amino-acid chain: Peptide methionine sulfoxide reductase MsrB (139 aa).

The MsrB domain maps to 9 to 131 (TPSDNTELTE…NSASLSFIDD (123 aa)). Zn(2+)-binding residues include C48, C51, C97, and C100. C120 serves as the catalytic Nucleophile.

This sequence belongs to the MsrB Met sulfoxide reductase family. Requires Zn(2+) as cofactor.

It carries out the reaction L-methionyl-[protein] + [thioredoxin]-disulfide + H2O = L-methionyl-(R)-S-oxide-[protein] + [thioredoxin]-dithiol. In Pectobacterium carotovorum subsp. carotovorum (strain PC1), this protein is Peptide methionine sulfoxide reductase MsrB.